The primary structure comprises 688 residues: Lipase (688 aa).

The signal sequence occupies residues 1–35; that stretch reads MKTRQNKYSIRKFSVGASSILIAALLFMGGGSAQA. The tract at residues 31 to 309 is disordered; sequence GSAQAAEQQQ…KSAKQKQYKN (279 aa). Residues 36 to 302 constitute a propeptide, removed in mature form; that stretch reads AEQQQDKGTV…KNEDQTNKSA (267 aa). A compositionally biased stretch (polar residues) spans 45-54; the sequence is VENSTTQSIG. Over residues 68–79 the composition is skewed to low complexity; it reads NKNVNEKSNVNS. 3 stretches are compositionally biased toward basic and acidic residues: residues 84–95, 103–117, and 126–143; these read ESLHNETPKNED, SQNDNKSESVVEQNK, and HSEEKPQQEQVELEKHAS. Polar residues predominate over residues 144–172; that stretch reads ENNQTLHSKAAQSNEDVKTKPSQLDNTAA. Residues 173 to 183 show a composition bias toward basic and acidic residues; sequence KQEDSQKENLS. Residues 184 to 211 are compositionally biased toward polar residues; it reads KQDTQSSKTTDLLRATAQNQSKDSQSTE. A compositionally biased stretch (basic and acidic residues) spans 240-267; that stretch reads SKEEPLKVDKQANPTTDKDKSSKNDKGS. Residues 274-289 show a composition bias toward polar residues; that stretch reads LESNAVATTNKQSKQQ. The Nucleophile role is filled by S418. The active-site Charge relay system is D609. D647 is a Ca(2+) binding site. Catalysis depends on H648, which acts as the Charge relay system. D650, D655, and D658 together coordinate Ca(2+).

It belongs to the AB hydrolase superfamily. Lipase family.

It is found in the secreted. It carries out the reaction a triacylglycerol + H2O = a diacylglycerol + a fatty acid + H(+). The polypeptide is Lipase (lip) (Staphylococcus epidermidis).